The primary structure comprises 92 residues: UPF0250 protein Smlt4048 (92 aa).

It belongs to the UPF0250 family.

This Stenotrophomonas maltophilia (strain K279a) protein is UPF0250 protein Smlt4048.